We begin with the raw amino-acid sequence, 119 residues long: MIQKNTLLDVADNSGARKVLCIGLLNGKKSASVGDVIVVSTKVITPRGKVSKGKVYKAVVVRVKKAVRRLDGSIIRFSSNAVVLINDQGDPLGTRVFGPIKKLPFGLFSKVMSLAVEVL.

It belongs to the universal ribosomal protein uL14 family. In terms of assembly, part of the 50S ribosomal subunit. Forms a cluster with proteins L3 and L19. In the 70S ribosome, L14 and L19 interact and together make contacts with the 16S rRNA in bridges B5 and B8.

Functionally, binds to 23S rRNA. Forms part of two intersubunit bridges in the 70S ribosome. The protein is Large ribosomal subunit protein uL14 of Ehrlichia canis (strain Jake).